We begin with the raw amino-acid sequence, 380 residues long: O-antigen polymerase (380 aa).

A run of 12 helical transmembrane segments spans residues 1-21 (MTYF…RLTP), 27-47 (NIVL…TFNE), 55-75 (ATTL…YILI), 94-114 (YIYW…IILL), 132-152 (SISG…MYLA), 169-189 (FLLA…VYIV), 201-221 (LIYG…LGKF), 229-249 (IISA…AAFN), 282-302 (ILPW…FAPW), 306-326 (LGLY…GIWF), 332-352 (LAVG…FFQE), and 353-373 (HYLL…LLAM).

Its subcellular location is the cell inner membrane. It carries out the reaction n lipid-linked O-antigen repeat units = a lipid-linked O antigen + (n-1) polyisoprenyl diphosphate.. It participates in bacterial outer membrane biogenesis; LPS O-antigen biosynthesis. Its function is as follows. Polymerase involved in the biosynthesis of the lipopolysaccharide (LPS). Catalyzes the polymerization of the O-antigen repeat units on the periplasmic face of the inner membrane, leading to the formation of the lipid-linked O-antigen molecule. This Shigella dysenteriae protein is O-antigen polymerase.